The primary structure comprises 238 residues: Inactive glycoside hydrolase XLP1 (238 aa).

The signal sequence occupies residues 1–19 (MKSFLIAIVIAVLLPVSAA). Glu-133 is an active-site residue. 2 N-linked (GlcNAc...) asparagine glycosylation sites follow: Asn-171 and Asn-187. The active site involves Glu-219.

It belongs to the glycosyl hydrolase 12 (cellulase H) family. As to quaternary structure, interacts with host apoplastic glucanase inhibitor GIP2.

It is found in the secreted. Its function is as follows. Non-functional secreted XEG1-like protein that binds to host Nicotiana benthamiana apoplastic glucanase inhibitor protein GIP2 more tightly than does XEG1, thus it outcompetes XEG1 for GIP2 binding and frees functional XEG1 to support P.parasitica infection. With XEG1, is required to elevate apoplastic sugar during P.parasitica infection. This chain is Inactive glycoside hydrolase XLP1, found in Phytophthora nicotianae (strain INRA-310) (Phytophthora parasitica).